A 472-amino-acid polypeptide reads, in one-letter code: Glutamine synthetase (472 aa).

Positions 13-101 (SKARFVDLRF…TCDVIDPADG (89 aa)) constitute a GS beta-grasp domain. The GS catalytic domain occupies 108–472 (PRSIARRAEA…PLEFEMYYSL (365 aa)). 2 residues coordinate Mg(2+): glutamate 133 and glutamate 135. Glutamate 211 provides a ligand contact to ATP. Positions 216 and 224 each coordinate Mg(2+). L-glutamate contacts are provided by residues 268–269 (NG) and glycine 269. Mg(2+) is bound at residue histidine 273. Residues 275-277 (HQS) and serine 277 each bind ATP. L-glutamate is bound by residues arginine 325, glutamate 331, and arginine 343. Positions 343, 348, and 356 each coordinate ATP. Glutamate 361 serves as a coordination point for Mg(2+). L-glutamate is bound at residue arginine 363. Tyrosine 401 is modified (O-AMP-tyrosine).

The protein belongs to the glutamine synthetase family. Oligomer of 12 subunits arranged in the form of two hexameric ring. Requires Mg(2+) as cofactor.

It is found in the cytoplasm. The enzyme catalyses L-glutamate + NH4(+) + ATP = L-glutamine + ADP + phosphate + H(+). Its activity is regulated as follows. The activity of this enzyme could be controlled by adenylation under conditions of abundant glutamine. Functionally, catalyzes the ATP-dependent biosynthesis of glutamine from glutamate and ammonia. In Neisseria gonorrhoeae, this protein is Glutamine synthetase.